The sequence spans 431 residues: D-inositol 3-phosphate glycosyltransferase (431 aa).

Histidine 14 contacts 1D-myo-inositol 3-phosphate. Residues 20–21 (QP) and glycine 28 contribute to the UDP-N-acetyl-alpha-D-glucosamine site. Residues 25 to 30 (DAGGMN), lysine 83, tyrosine 116, threonine 140, and arginine 160 each bind 1D-myo-inositol 3-phosphate. The UDP-N-acetyl-alpha-D-glucosamine site is built by arginine 240 and lysine 245. Mg(2+) contacts are provided by tyrosine 315, arginine 316, and alanine 318. UDP-N-acetyl-alpha-D-glucosamine contacts are provided by glutamate 328 and glutamate 336. Threonine 342 contributes to the Mg(2+) binding site.

It belongs to the glycosyltransferase group 1 family. MshA subfamily. Homodimer.

The enzyme catalyses 1D-myo-inositol 3-phosphate + UDP-N-acetyl-alpha-D-glucosamine = 1D-myo-inositol 2-acetamido-2-deoxy-alpha-D-glucopyranoside 3-phosphate + UDP + H(+). Functionally, catalyzes the transfer of a N-acetyl-glucosamine moiety to 1D-myo-inositol 3-phosphate to produce 1D-myo-inositol 2-acetamido-2-deoxy-glucopyranoside 3-phosphate in the mycothiol biosynthesis pathway. The polypeptide is D-inositol 3-phosphate glycosyltransferase (Thermomonospora curvata (strain ATCC 19995 / DSM 43183 / JCM 3096 / KCTC 9072 / NBRC 15933 / NCIMB 10081 / Henssen B9)).